A 72-amino-acid polypeptide reads, in one-letter code: uncharacterized protein (72 aa).

This sequence belongs to the asfivirus I73R family.

The protein resides in the virion. This is an uncharacterized protein from Ornithodoros (relapsing fever ticks).